A 421-amino-acid chain; its full sequence is Nacrein-like protein M (421 aa).

Residue Asn-27 is glycosylated (N-linked (GlcNAc...) asparagine). Positions 33 to 420 (AGFSYDRSIC…KNKVTVYKSF (388 aa)) constitute an Alpha-carbonic anhydrase domain. Positions 132, 134, and 157 each coordinate Zn(2+). The segment covering 197–206 (DGFGDEPDDE) has biased composition (acidic residues). The tract at residues 197–303 (DGFGDEPDDE…GENGHKHGCR (107 aa)) is disordered. The segment covering 207–219 (ECKRILKGHHPDN) has biased composition (basic and acidic residues). Residues 220-295 (NENGNGDNGN…NNGDNGNNGE (76 aa)) show a composition bias toward low complexity. 24 consecutive repeat copies span residues 225–227 (GDN), 228–230 (GNN), 231–233 (GYN), 234–236 (GDN), 237–239 (GNN), 240–242 (GDN), 243–245 (GNN), 246–248 (GYN), 249–251 (GDN), 252–254 (GNN), 255–257 (GDN), 258–260 (GNN), 261–263 (GYN), 264–266 (GDN), 267–269 (GNN), 270–272 (GDN), 273–275 (GNN), 276–278 (GEN), 279–281 (GNN), 282–284 (GEN), 285–287 (GNN), 288–290 (GDN), 291–292 (GN), and 294–296 (GEN). Residues 225–296 (GDNGNNGYNG…NGDNGNNGEN (72 aa)) form a 24 X 3 AA approximate tandem repeats of G-X-N region. A substrate-binding site is contributed by 361 to 362 (TT).

The protein belongs to the alpha-carbonic anhydrase family. As to quaternary structure, homooligomer; disulfide-linked. May also be disulfide-linked to insoluble organic matrix. The cofactor is Zn(2+). Expressed in the mantle.

The protein localises to the secreted. Its subcellular location is the extracellular space. It localises to the extracellular matrix. The catalysed reaction is hydrogencarbonate + H(+) = CO2 + H2O. Its function is as follows. Acts as a negative regulator for calcification in the shells of mollusks. May function both as a calcium concentrator and as a carbonic anhydrase required for production of carbonate ions, which are assembled to CaCO(3) at mineralization sites. Is important for shell formation in both the calcitic prismatic layer and the aragonitic nacreous layerr. Shows inhibitory activity of crystal formation when present in free state but, when attached to the insoluble matrix, may regulate the form and size of aragonite crystal. This Pinctada maxima (Silver-lipped pearl oyster) protein is Nacrein-like protein M.